We begin with the raw amino-acid sequence, 416 residues long: 2-aminoadipate transaminase (416 aa).

Pyridoxal 5'-phosphate is bound by residues 102–103 and Q233; that span reads GA. K259 carries the post-translational modification N6-(pyridoxal phosphate)lysine. T288 provides a ligand contact to pyridoxal 5'-phosphate.

This sequence belongs to the class-III pyridoxal-phosphate-dependent aminotransferase family. Pyridoxal 5'-phosphate serves as cofactor.

It catalyses the reaction L-2-aminoadipate + 2-oxoglutarate = 2-oxoadipate + L-glutamate. The catalysed reaction is 5-aminopentanoate + 2-oxoglutarate = 5-oxopentanoate + L-glutamate. It participates in amino-acid degradation. Functionally, catalyzes the conversion of 2-aminoadipate (2AA) to 2-oxoadipate (2OA). Is most active on L-2-aminoadipate (L-2AA) and shows only weak activity on the enantiomer, D-2-aminoadipate (D-2AA). Shows moderate activity on 5-aminovalerate (5AVA) and weak activity toward 4-aminobutyrate (GABA). Is involved in a D-lysine catabolic pathway. This chain is 2-aminoadipate transaminase, found in Pseudomonas putida (strain ATCC 47054 / DSM 6125 / CFBP 8728 / NCIMB 11950 / KT2440).